The following is a 422-amino-acid chain: Exodeoxyribonuclease 7 large subunit (422 aa).

Belongs to the XseA family. In terms of assembly, heterooligomer composed of large and small subunits.

The protein localises to the cytoplasm. The enzyme catalyses Exonucleolytic cleavage in either 5'- to 3'- or 3'- to 5'-direction to yield nucleoside 5'-phosphates.. Functionally, bidirectionally degrades single-stranded DNA into large acid-insoluble oligonucleotides, which are then degraded further into small acid-soluble oligonucleotides. This chain is Exodeoxyribonuclease 7 large subunit, found in Leptospira borgpetersenii serovar Hardjo-bovis (strain JB197).